The chain runs to 396 residues: Phosphoglycerate kinase (396 aa).

Residues 21-23 (DLN), arginine 36, 59-62 (HLGR), arginine 113, and arginine 146 each bind substrate. Residues lysine 197, glutamate 319, and 345–348 (GGDT) contribute to the ATP site.

Belongs to the phosphoglycerate kinase family. In terms of assembly, monomer.

The protein resides in the cytoplasm. It carries out the reaction (2R)-3-phosphoglycerate + ATP = (2R)-3-phospho-glyceroyl phosphate + ADP. Its pathway is carbohydrate degradation; glycolysis; pyruvate from D-glyceraldehyde 3-phosphate: step 2/5. The sequence is that of Phosphoglycerate kinase from Legionella pneumophila (strain Lens).